We begin with the raw amino-acid sequence, 343 residues long: UPF0324 membrane protein LJ_1117 (343 aa).

10 helical membrane passes run 10 to 27 (FGLA…GIFL), 32 to 54 (YVNL…VLPV), 64 to 86 (IGFI…LNLT), 91 to 113 (AGIK…TYWL), 123 to 145 (LAVL…VSPQ), 157 to 179 (NEVL…EIVI), 219 to 241 (ALIM…GYWY), 262 to 284 (IPWF…FPPV), 288 to 310 (GLVQ…SVNF), and 317 to 339 (GGTV…IIMS).

Belongs to the UPF0324 family.

It localises to the cell membrane. The polypeptide is UPF0324 membrane protein LJ_1117 (Lactobacillus johnsonii (strain CNCM I-12250 / La1 / NCC 533)).